The following is an 849-amino-acid chain: Villin-1 (849 aa).

Gelsolin-like repeat units lie at residues 30–107 (IEKS…DKFL), 147–213 (RVTE…EDGK), 262–335 (VPVE…TVEF), 405–475 (QEQL…PEMF), and 527–566 (AIQVDLAASSLNSSHCYILQAGGSFFTWLGSLSSPSDHNL). The tract at residues 739–849 (ETPERSLRKS…AVATGTPRRL (111 aa)) is disordered. Low complexity-rich tracts occupy residues 747–782 (KSSSSSLPRRSPGTSSSEPTTPEQRAAARTFASAST) and 791–823 (PAALSPSLSTPSPSPRSRSSASSSPASWNSTPS).

It belongs to the villin/gelsolin family.

It localises to the cytoplasm. Its subcellular location is the cytoskeleton. Functionally, ca(2+)-independent actin-binding protein. Binds actin microfilaments (MFs). Involved in actin filament bundling, severing and capping. Caps the barbed end of actin filaments and protects them from disassembly. Promotes VLN3-mediated MF severing. The protein is Villin-1 of Oryza sativa subsp. indica (Rice).